Consider the following 918-residue polypeptide: Translation initiation factor IF-2 (918 aa).

The tract at residues D39–T321 is disordered. The segment covering K95 to N146 has biased composition (low complexity). The span at P148–R158 shows a compositional bias: basic and acidic residues. The segment covering A159–E174 has biased composition (low complexity). A compositionally biased stretch (polar residues) spans P180–A190. Composition is skewed to low complexity over residues N201–N231, S237–N267, and G278–P296. Positions R302–R313 are enriched in basic residues. A tr-type G domain is found at S419–K588. The tract at residues G428–T435 is G1. Position 428 to 435 (G428 to T435) interacts with GTP. Residues G453–G457 form a G2 region. Positions D474 to G477 are G3. GTP contacts are provided by residues D474 to H478 and N528 to D531. The interval N528–D531 is G4. The tract at residues S564–K566 is G5.

The protein belongs to the TRAFAC class translation factor GTPase superfamily. Classic translation factor GTPase family. IF-2 subfamily.

The protein resides in the cytoplasm. Its function is as follows. One of the essential components for the initiation of protein synthesis. Protects formylmethionyl-tRNA from spontaneous hydrolysis and promotes its binding to the 30S ribosomal subunits. Also involved in the hydrolysis of GTP during the formation of the 70S ribosomal complex. This Pediococcus pentosaceus (strain ATCC 25745 / CCUG 21536 / LMG 10740 / 183-1w) protein is Translation initiation factor IF-2.